A 545-amino-acid chain; its full sequence is MPVVSLPYKYLERLCGIDRKTIIDHLPMIGSDIERILEDQVDVEFFPSRVDLYSTEGVARAMRGFLELETGEEVYPVSPSSITFSVDENLKEVRPYIGSAVIRDIQLDNEAIISLMGVQEALHWVVGRGRAKVAIGVHDLDKVTPPFRYYGAPVTRSFIPLDYDREMTLTEIMEEHPKGRDYSHIVKDKPVMPLIEDANGNVLSFPPIINGELTRVTESSKNLLLDVTGTDERAVMTALRVLCTTLITAGGRCESVTVNGVVMPDLSPALRNINVTSCNKLLGTSFSADEIATILKKMRYGAEKSGDSTVSIRIPCYRADIMHEWDVYEDVAIGAGFGNLEAELPATFATGCEHPIIALASAIRDICSGLGYLEVMPFTLSNEDVMYTRMQREPDPKALHVLHPISEEQTLVRTDLLPLLLDLLRMNKRRELPQRIFHTGDVVSSMQTYQKLALASTHPGADFSEAYATTDALMRELGISYLPAESADPAFIPGRAVDIMVDGKKMGVFGEIHPGVLNKFDIDQPVIGIEIDLHLLFPGQKETKS.

Positions 266–342 constitute a B5 domain; it reads LSPALRNINV…IGAGFGNLEA (77 aa). 4 residues coordinate Mg(2+): D320, D326, E329, and D330.

Belongs to the phenylalanyl-tRNA synthetase beta subunit family. Type 2 subfamily. As to quaternary structure, tetramer of two alpha and two beta subunits. The cofactor is Mg(2+).

The protein localises to the cytoplasm. The catalysed reaction is tRNA(Phe) + L-phenylalanine + ATP = L-phenylalanyl-tRNA(Phe) + AMP + diphosphate + H(+). In Methanospirillum hungatei JF-1 (strain ATCC 27890 / DSM 864 / NBRC 100397 / JF-1), this protein is Phenylalanine--tRNA ligase beta subunit.